A 197-amino-acid polypeptide reads, in one-letter code: Probable GTP-binding protein EngB (197 aa).

The region spanning 22-195 (KRIEIAFVGR…LKVLESVIDF (174 aa)) is the EngB-type G domain. GTP-binding positions include 30–37 (GRSNVGKS), 57–61 (GKTRL), 75–78 (DLPG), 142–145 (TKVD), and 174–176 (FSS). 2 residues coordinate Mg(2+): Ser37 and Thr59.

The protein belongs to the TRAFAC class TrmE-Era-EngA-EngB-Septin-like GTPase superfamily. EngB GTPase family. Mg(2+) is required as a cofactor.

Functionally, necessary for normal cell division and for the maintenance of normal septation. This chain is Probable GTP-binding protein EngB, found in Clostridium kluyveri (strain ATCC 8527 / DSM 555 / NBRC 12016 / NCIMB 10680 / K1).